We begin with the raw amino-acid sequence, 86 residues long: Mu-theraphotoxin-Hhn1b 1 (86 aa).

A signal peptide spans Met-1 to Ala-21. Residues Ser-22–Arg-49 constitute a propeptide that is removed on maturation. 3 disulfide bridges follow: Cys-51–Cys-66, Cys-58–Cys-73, and Cys-65–Cys-80. An Isoleucine amide modification is found at Ile-84.

The protein belongs to the neurotoxin 10 (Hwtx-1) family. 22 (Htx-4) subfamily. Monomer. As to expression, expressed by the venom gland.

It is found in the secreted. Its function is as follows. Neurotoxin that selectively inhibits neuronal tetrodotoxin-sensitive voltage-gated sodium channels (Nav) (IC(50)=44.6 nM). It is active on Nav1.2/SCN2A (IC(50)=22.4 nM), Nav1.6/SCN8A (IC(50)=50.1 nM) and Nav1.7/SCN9A (IC(50)=48.9 nM). It shows low affinity for lipid bilayers. The polypeptide is Mu-theraphotoxin-Hhn1b 1 (Cyriopagopus hainanus (Chinese bird spider)).